We begin with the raw amino-acid sequence, 151 residues long: Endoribonuclease YbeY (151 aa).

The Zn(2+) site is built by His117, His121, and His127.

It belongs to the endoribonuclease YbeY family. The cofactor is Zn(2+).

It is found in the cytoplasm. Single strand-specific metallo-endoribonuclease involved in late-stage 70S ribosome quality control and in maturation of the 3' terminus of the 16S rRNA. The sequence is that of Endoribonuclease YbeY from Alkaliphilus oremlandii (strain OhILAs) (Clostridium oremlandii (strain OhILAs)).